The primary structure comprises 228 residues: Protein Thf1 (228 aa).

Residues 201 to 223 (IKRSKEVVDELSQTERRKREERA) are a coiled coil. A disordered region spans residues 209 to 228 (DELSQTERRKREERAVSQPG).

The protein belongs to the THF1 family.

Its function is as follows. May be involved in photosynthetic membrane biogenesis. The sequence is that of Protein Thf1 from Gloeobacter violaceus (strain ATCC 29082 / PCC 7421).